The chain runs to 354 residues: Probable tartrate dehydrogenase/decarboxylase (354 aa).

Mn(2+)-binding residues include aspartate 221, aspartate 245, and aspartate 249.

It belongs to the isocitrate and isopropylmalate dehydrogenases family. Mg(2+) serves as cofactor. Mn(2+) is required as a cofactor. It depends on K(+) as a cofactor.

It carries out the reaction tartrate + NAD(+) = 2-hydroxy-3-oxosuccinate + NADH + H(+). It catalyses the reaction (2R,3S)-tartrate + NAD(+) = 2-hydroxy-3-oxosuccinate + NADH + H(+). The catalysed reaction is (2R,3R)-tartrate + NAD(+) = 2-hydroxy-3-oxosuccinate + NADH + H(+). The enzyme catalyses (2R,3R)-tartrate + H(+) = (R)-glycerate + CO2. It carries out the reaction (R)-malate + NAD(+) = pyruvate + CO2 + NADH. In terms of biological role, has multiple catalytic activities. Apart from catalyzing the oxidation of (+)-tartrate to oxaloglycolate, also converts meso-tartrate to D-glycerate and catalyzes the oxidative decarboxylation of D-malate to pyruvate. This is Probable tartrate dehydrogenase/decarboxylase (ycsA) from Bacillus subtilis (strain 168).